Here is a 706-residue protein sequence, read N- to C-terminus: Heat shock protein 75 kDa, mitochondrial (706 aa).

The transit peptide at 1–60 directs the protein to the mitochondrion; it reads MARELRALLLWGRGLQSALRAPALAGVRRGKPVLHLQKTTVHFRDPTQSLASGISAGQLY. ATP is bound by residues Asn121 and Asp160. Residue Ser172 is modified to Phosphoserine. Asn173 provides a ligand contact to ATP. Thr176 is modified (phosphothreonine). Residue Ser196 is modified to Phosphoserine. Residue Phe207 coordinates ATP. An N6-acetyllysine mark is found at Lys264, Lys326, and Lys334. Position 404 (Arg404) interacts with ATP. Residues Lys426, Lys433, and Lys468 each carry the N6-acetyllysine modification. Residue Thr496 is modified to Phosphothreonine. Residue Ser570 is modified to Phosphoserine.

The protein belongs to the heat shock protein 90 family. As to quaternary structure, binds to the intracellular domain of tumor necrosis factor type 1 receptor. Binds to RB1. Interacts with SRC. Interacts with SDHA.

The protein localises to the mitochondrion. Its subcellular location is the mitochondrion inner membrane. It is found in the mitochondrion matrix. Functionally, chaperone that expresses an ATPase activity. Involved in maintaining mitochondrial function and polarization, downstream of PINK1 and mitochondrial complex I. Is a negative regulator of mitochondrial respiration able to modulate the balance between oxidative phosphorylation and aerobic glycolysis. The impact of TRAP1 on mitochondrial respiration is probably mediated by modulation of mitochondrial SRC and inhibition of SDHA. In Rattus norvegicus (Rat), this protein is Heat shock protein 75 kDa, mitochondrial (Trap1).